The chain runs to 241 residues: Pyridoxal phosphate phosphatase PHOSPHO2 (241 aa).

The active-site Nucleophile is the aspartate 8. Residues aspartate 8 and aspartate 10 each contribute to the Mg(2+) site. The active-site Proton donor is aspartate 10. Residues aspartate 19 and aspartate 99 each coordinate substrate. Aspartate 179 lines the Mg(2+) pocket.

This sequence belongs to the HAD-like hydrolase superfamily. PHOSPHO family. Requires Mg(2+) as cofactor.

The enzyme catalyses pyridoxal 5'-phosphate + H2O = pyridoxal + phosphate. In terms of biological role, phosphatase that has high activity toward pyridoxal 5'-phosphate (PLP). Also active at much lower level toward pyrophosphate, phosphoethanolamine (PEA), phosphocholine (PCho), phospho-l-tyrosine, fructose-6-phosphate, p-nitrophenyl phosphate, and h-glycerophosphate. The protein is Pyridoxal phosphate phosphatase PHOSPHO2 (PHOSPHO2) of Bos taurus (Bovine).